Reading from the N-terminus, the 1003-residue chain is Cation-transporting ATPase HMA5 (1003 aa).

Residues 6 to 25 (LSAVAGGGRPAAAGGGGDEM) are disordered. The span at 10 to 22 (AGGGRPAAAGGGG) shows a compositional bias: gly residues. HMA domains lie at 51–117 (EEAH…FDAE), 133–199 (LSAQ…FEAA), and 207–273 (DKIL…NGRL). 4 residues coordinate Cu cation: C62, C65, C144, and C147. The next 8 membrane-spanning stretches (helical) occupy residues 302–322 (SLFL…IPFI), 331–351 (GPFH…QFVV), 372–392 (VLVV…LLYG), 396–416 (GFHP…VLFG), 562–582 (IFVP…FLCG), 599–619 (FVFS…CALG), 938–958 (FFAM…LFPF), and 966–986 (WLAG…SLLL).

This sequence belongs to the cation transport ATPase (P-type) (TC 3.A.3) family. Type IB subfamily. Expressed in root vascular cylinder, vascular bundles and mesophyll cells of leaf blades, and anther walls and microspores of stamens.

The protein localises to the cell membrane. Metal efflux transporter that may play a role in detoxification of heavy metals, such as zinc, copper, lead and cadmium, especially in the shoots. This chain is Cation-transporting ATPase HMA5, found in Oryza sativa subsp. japonica (Rice).